The chain runs to 147 residues: Small ribosomal subunit protein bS6 (147 aa).

The span at 97-141 (EEGPSAMMRKADRDRERDDRGGGFRGDREGGFRGDRGPRRPREEA) shows a compositional bias: basic and acidic residues. Positions 97–147 (EEGPSAMMRKADRDRERDDRGGGFRGDREGGFRGDRGPRRPREEAPAVVEE) are disordered.

This sequence belongs to the bacterial ribosomal protein bS6 family.

Its function is as follows. Binds together with bS18 to 16S ribosomal RNA. The polypeptide is Small ribosomal subunit protein bS6 (Nitrobacter hamburgensis (strain DSM 10229 / NCIMB 13809 / X14)).